We begin with the raw amino-acid sequence, 424 residues long: Glutamyl-tRNA reductase (424 aa).

Residues 53–56 (TCNR), Ser-111, 116–118 (EPQ), and Gln-122 contribute to the substrate site. Residue Cys-54 is the Nucleophile of the active site. 191-196 (GAGEMI) provides a ligand contact to NADP(+).

This sequence belongs to the glutamyl-tRNA reductase family. Homodimer.

The catalysed reaction is (S)-4-amino-5-oxopentanoate + tRNA(Glu) + NADP(+) = L-glutamyl-tRNA(Glu) + NADPH + H(+). It participates in porphyrin-containing compound metabolism; protoporphyrin-IX biosynthesis; 5-aminolevulinate from L-glutamyl-tRNA(Glu): step 1/2. Its function is as follows. Catalyzes the NADPH-dependent reduction of glutamyl-tRNA(Glu) to glutamate 1-semialdehyde (GSA). The chain is Glutamyl-tRNA reductase from Bordetella bronchiseptica (strain ATCC BAA-588 / NCTC 13252 / RB50) (Alcaligenes bronchisepticus).